Reading from the N-terminus, the 95-residue chain is Small ribosomal subunit protein uS14 (95 aa).

It belongs to the universal ribosomal protein uS14 family. In terms of assembly, part of the 30S ribosomal subunit. Contacts proteins S3 and S10.

Its function is as follows. Binds 16S rRNA, required for the assembly of 30S particles and may also be responsible for determining the conformation of the 16S rRNA at the A site. The polypeptide is Small ribosomal subunit protein uS14 (rpsN) (Carsonella ruddii).